Consider the following 297-residue polypeptide: Mitochondrial citrate transporter A (297 aa).

3 Solcar repeats span residues 12–91 (PSSL…LKSL), 102–188 (PKTV…LKQM), and 199–286 (LGTA…TMDA). Transmembrane regions (helical) follow at residues 18–31 (IIAG…EIAI), 61–81 (SQWY…AGIR), 99–119 (ISGP…SLLA), 160–180 (FFQG…TRFS), 192–212 (YVAP…GIAG), and 251–272 (KDEG…LIMS).

It belongs to the mitochondrial carrier (TC 2.A.29) family.

Its subcellular location is the mitochondrion inner membrane. The enzyme catalyses citrate(in) + H(+)(in) = citrate(out) + H(+)(out). Functionally, mitochondrial transporter that mediates citrate export from mitochondria to cytoplasm. Both ctpA, ctpB, and ctpD play important roles in citric acid transport across the mitochondrial membrane and function in a redundant manner. The polypeptide is Mitochondrial citrate transporter A (Aspergillus niger (strain ATCC 1015 / CBS 113.46 / FGSC A1144 / LSHB Ac4 / NCTC 3858a / NRRL 328 / USDA 3528.7)).